The primary structure comprises 530 residues: ATP-dependent 6-phosphofructokinase 4, chloroplastic (530 aa).

A chloroplast-targeting transit peptide spans 1–54; the sequence is MEASISFLGSTKPNISLFNPSSNVLPRRDFPLPALKLKKVSVLPRILHQKRLIR. Position 121 is a phosphoserine (Ser121). ATP-binding positions include Gly152, 215–216, and 240–243; these read RG and GGGT. Residues 269-271, 314-316, Glu370, and 427-430 each bind substrate; these read TID, MGR, and YMIR. Asp271 serves as the catalytic Proton acceptor.

Belongs to the phosphofructokinase type A (PFKA) family. PPi-dependent PFK group II subfamily. Atypical ATP-dependent clade 'X' sub-subfamily. Homotetramer. The cofactor is Mg(2+). In terms of tissue distribution, expressed in leaves, stems and flowers.

The protein resides in the plastid. It is found in the chloroplast. The enzyme catalyses beta-D-fructose 6-phosphate + ATP = beta-D-fructose 1,6-bisphosphate + ADP + H(+). Its pathway is carbohydrate degradation; glycolysis; D-glyceraldehyde 3-phosphate and glycerone phosphate from D-glucose: step 3/4. With respect to regulation, allosterically activated by AMP. Catalyzes the phosphorylation of D-fructose 6-phosphate to fructose 1,6-bisphosphate by ATP, the first committing step of glycolysis. The sequence is that of ATP-dependent 6-phosphofructokinase 4, chloroplastic from Arabidopsis thaliana (Mouse-ear cress).